The primary structure comprises 61 residues: Small ribosomal subunit protein uS14 (61 aa).

Zn(2+) contacts are provided by cysteine 24, cysteine 27, cysteine 40, and cysteine 43.

It belongs to the universal ribosomal protein uS14 family. Zinc-binding uS14 subfamily. In terms of assembly, part of the 30S ribosomal subunit. Contacts proteins S3 and S10. Zn(2+) serves as cofactor.

Binds 16S rRNA, required for the assembly of 30S particles and may also be responsible for determining the conformation of the 16S rRNA at the A site. This is Small ribosomal subunit protein uS14 from Clostridium botulinum (strain ATCC 19397 / Type A).